A 77-amino-acid polypeptide reads, in one-letter code: Acyl carrier protein (77 aa).

The region spanning 2–77 is the Carrier domain; it reads SDVADRVKKI…DAVKFISEAS (76 aa). At S37 the chain carries O-(pantetheine 4'-phosphoryl)serine.

It belongs to the acyl carrier protein (ACP) family. Post-translationally, 4'-phosphopantetheine is transferred from CoA to a specific serine of apo-ACP by AcpS. This modification is essential for activity because fatty acids are bound in thioester linkage to the sulfhydryl of the prosthetic group.

It localises to the cytoplasm. The protein operates within lipid metabolism; fatty acid biosynthesis. In terms of biological role, carrier of the growing fatty acid chain in fatty acid biosynthesis. This is Acyl carrier protein from Ruegeria sp. (strain TM1040) (Silicibacter sp.).